Here is a 195-residue protein sequence, read N- to C-terminus: MRTASISRRTAETDVSVSIDLDGTGKATIATGVGFLDHMLELFARHGLFDVTIKVEGDLHVDQHHTTEDAGIALGQAVAQALGDKRGIARYADIHLPMDETLSRIAIDISGRPFLVFRTSFRVEKIGQFDTELVREFFQAFAMNAGITLHVETLYGENAHHIAESVFKGLARSLRKAVAIDPREDGRVPSTKGSL.

Belongs to the imidazoleglycerol-phosphate dehydratase family.

It is found in the cytoplasm. The enzyme catalyses D-erythro-1-(imidazol-4-yl)glycerol 3-phosphate = 3-(imidazol-4-yl)-2-oxopropyl phosphate + H2O. Its pathway is amino-acid biosynthesis; L-histidine biosynthesis; L-histidine from 5-phospho-alpha-D-ribose 1-diphosphate: step 6/9. This chain is Imidazoleglycerol-phosphate dehydratase, found in Methylorubrum extorquens (strain CM4 / NCIMB 13688) (Methylobacterium extorquens).